The following is a 317-amino-acid chain: 4-hydroxy-3-methylbut-2-enyl diphosphate reductase (317 aa).

C12 serves as a coordination point for [4Fe-4S] cluster. H41 and H74 together coordinate (2E)-4-hydroxy-3-methylbut-2-enyl diphosphate. Positions 41 and 74 each coordinate dimethylallyl diphosphate. Isopentenyl diphosphate-binding residues include H41 and H74. C96 lines the [4Fe-4S] cluster pocket. H124 is a binding site for (2E)-4-hydroxy-3-methylbut-2-enyl diphosphate. Residue H124 coordinates dimethylallyl diphosphate. H124 lines the isopentenyl diphosphate pocket. The active-site Proton donor is the E126. Residue T168 coordinates (2E)-4-hydroxy-3-methylbut-2-enyl diphosphate. C198 lines the [4Fe-4S] cluster pocket. (2E)-4-hydroxy-3-methylbut-2-enyl diphosphate-binding residues include S226, S227, N228, and S270. Dimethylallyl diphosphate contacts are provided by S226, S227, N228, and S270. Isopentenyl diphosphate-binding residues include S226, S227, N228, and S270.

It belongs to the IspH family. It depends on [4Fe-4S] cluster as a cofactor.

The catalysed reaction is isopentenyl diphosphate + 2 oxidized [2Fe-2S]-[ferredoxin] + H2O = (2E)-4-hydroxy-3-methylbut-2-enyl diphosphate + 2 reduced [2Fe-2S]-[ferredoxin] + 2 H(+). It catalyses the reaction dimethylallyl diphosphate + 2 oxidized [2Fe-2S]-[ferredoxin] + H2O = (2E)-4-hydroxy-3-methylbut-2-enyl diphosphate + 2 reduced [2Fe-2S]-[ferredoxin] + 2 H(+). Its pathway is isoprenoid biosynthesis; dimethylallyl diphosphate biosynthesis; dimethylallyl diphosphate from (2E)-4-hydroxy-3-methylbutenyl diphosphate: step 1/1. It functions in the pathway isoprenoid biosynthesis; isopentenyl diphosphate biosynthesis via DXP pathway; isopentenyl diphosphate from 1-deoxy-D-xylulose 5-phosphate: step 6/6. Catalyzes the conversion of 1-hydroxy-2-methyl-2-(E)-butenyl 4-diphosphate (HMBPP) into a mixture of isopentenyl diphosphate (IPP) and dimethylallyl diphosphate (DMAPP). Acts in the terminal step of the DOXP/MEP pathway for isoprenoid precursor biosynthesis. The polypeptide is 4-hydroxy-3-methylbut-2-enyl diphosphate reductase (Hahella chejuensis (strain KCTC 2396)).